Reading from the N-terminus, the 452-residue chain is Phosphoglucosamine mutase (452 aa).

The active-site Phosphoserine intermediate is the Ser-98. Mg(2+)-binding residues include Ser-98, Asp-239, Asp-241, and Asp-243. Ser-98 is subject to Phosphoserine.

It belongs to the phosphohexose mutase family. Requires Mg(2+) as cofactor. Post-translationally, activated by phosphorylation.

It catalyses the reaction alpha-D-glucosamine 1-phosphate = D-glucosamine 6-phosphate. Its function is as follows. Catalyzes the conversion of glucosamine-6-phosphate to glucosamine-1-phosphate. In Anaplasma marginale (strain St. Maries), this protein is Phosphoglucosamine mutase.